Reading from the N-terminus, the 496-residue chain is Probable CtpA-like serine protease (496 aa).

The segment covering 1 to 16 (MDDKQHTSSSDDERAE) has biased composition (basic and acidic residues). A disordered region spans residues 1 to 27 (MDDKQHTSSSDDERAEIATSNQDQETN). Over residues 18–27 (ATSNQDQETN) the composition is skewed to polar residues. Residues 39–59 (FISILIGTILITAVITVVAYI) form a helical membrane-spanning segment. Residues 124 to 206 (TKSFNEGVSG…TEVTLTVQRG (83 aa)) enclose the PDZ domain. Active-site charge relay system residues include Ser-329, Asp-340, and Lys-354.

It belongs to the peptidase S41A family.

The protein resides in the cell membrane. This is Probable CtpA-like serine protease from Staphylococcus aureus (strain COL).